The chain runs to 787 residues: Protocadherin beta-15 (787 aa).

The first 26 residues, 1–26, serve as a signal peptide directing secretion; it reads MEPAGERFPEQRQVLILLLLLEVTLA. At 27–690 the chain is on the extracellular side; sequence GWEPRRYSVM…AQADSLTVYL (664 aa). Cadherin domains are found at residues 35–133, 138–242, 247–347, 352–451, and 456–561; these read VMEE…SPEF, MTLK…APEF, YEVQ…FPEL, LTSP…APAF, and YTLF…SPFV. An N-linked (GlcNAc...) asparagine glycan is attached at asparagine 418. The N-linked (GlcNAc...) asparagine glycan is linked to asparagine 567. Residues 568–671 enclose the Cadherin 6 domain; that stretch reads GSAPCTELVP…LVDGFSQPYL (104 aa). Residues 691–711 traverse the membrane as a helical segment; that stretch reads VVALASVSSLFLFSVFLFVAV. Residues 712–787 are Cytoplasmic-facing; it reads RLCRRSRAAS…DSRRKSEFLE (76 aa).

It localises to the cell membrane. Functionally, potential calcium-dependent cell-adhesion protein. May be involved in the establishment and maintenance of specific neuronal connections in the brain. The protein is Protocadherin beta-15 (PCDHB15) of Homo sapiens (Human).